The chain runs to 270 residues: Putative protein-disulfide oxidoreductase RT0103 (270 aa).

An N-terminal signal peptide occupies residues 1–17; the sequence is MKNIFIVLIFLFLSSCA. The Thioredoxin domain maps to 71 to 264; that stretch reads SVLTQDLHEQ…ISRAVDRALE (194 aa). Residues C117 and C120 are joined by a disulfide bond.

The protein belongs to the thioredoxin family. DsbA subfamily.

The protein localises to the periplasm. In terms of biological role, may be required for disulfide bond formation in some proteins. This chain is Putative protein-disulfide oxidoreductase RT0103, found in Rickettsia typhi (strain ATCC VR-144 / Wilmington).